The chain runs to 232 residues: Large ribosomal subunit protein uL1 (232 aa).

The protein belongs to the universal ribosomal protein uL1 family. As to quaternary structure, part of the 50S ribosomal subunit.

Its function is as follows. Binds directly to 23S rRNA. The L1 stalk is quite mobile in the ribosome, and is involved in E site tRNA release. Protein L1 is also a translational repressor protein, it controls the translation of the L11 operon by binding to its mRNA. This Xanthomonas axonopodis pv. citri (strain 306) protein is Large ribosomal subunit protein uL1.